Reading from the N-terminus, the 349-residue chain is Inositol-tetrakisphosphate 1-kinase 2 (349 aa).

Residues lysine 48 and lysine 90 each coordinate 1D-myo-inositol 1,3,4-trisphosphate. ATP-binding residues include arginine 125 and lysine 175. Residues histidine 186 and lysine 218 each coordinate 1D-myo-inositol 1,3,4-trisphosphate. ATP-binding positions include 207–218 (QEFVNHGGILFK) and serine 233. Mg(2+) contacts are provided by aspartate 298, aspartate 313, and asparagine 315. Asparagine 315 is a 1D-myo-inositol 1,3,4-trisphosphate binding site.

Belongs to the ITPK1 family. Monomer. It depends on Mg(2+) as a cofactor.

It catalyses the reaction 1D-myo-inositol 3,4,5,6-tetrakisphosphate + ATP = 1D-myo-inositol 1,3,4,5,6-pentakisphosphate + ADP + H(+). The catalysed reaction is 1D-myo-inositol 1,3,4-trisphosphate + ATP = 1D-myo-inositol 1,3,4,5-tetrakisphosphate + ADP + H(+). The enzyme catalyses 1D-myo-inositol 1,3,4-trisphosphate + ATP = 1D-myo-inositol 1,3,4,6-tetrakisphosphate + ADP + H(+). Kinase that can phosphorylate various inositol polyphosphate such as Ins(3,4,5,6)P4 or Ins(1,3,4)P3 and participates in phytic acid biosynthesis in developing seeds. Phytic acid is the primary storage form of phosphorus in cereal grains and other plant seeds. The chain is Inositol-tetrakisphosphate 1-kinase 2 (ITPK2) from Oryza sativa subsp. indica (Rice).